A 477-amino-acid chain; its full sequence is P3 protein (477 aa).

Positions 1 to 21 (MVLMQDKGSSQQWPGLGGEGG) are disordered. 8 helical membrane-spanning segments follow: residues 225 to 245 (PMLL…FLMA), 253 to 273 (ALAL…SYLF), 281 to 301 (VTLA…FLPL), 320 to 340 (ISKI…GVLI), 361 to 381 (VLLL…LAGI), 383 to 403 (LPIV…GYCL), 417 to 437 (VSIE…QLSL), and 450 to 470 (FIVA…HFIY).

The protein belongs to the bile acid:sodium symporter (BASS) (TC 2.A.28) family.

The protein localises to the membrane. The ubiquitous expression and the conservation of the sequence in distant animal species suggest that the gene codes for a protein with housekeeping functions. This Homo sapiens (Human) protein is P3 protein (SLC10A3).